The chain runs to 607 residues: WD repeat-containing protein 1-B (607 aa).

13 WD repeats span residues 4 to 45 (EIKK…IRNI), 48 to 87 (PAIADIYTEHAHQVVVARYAPSGFYIASGDTSGKLRIWDT), 93 to 135 (LLKY…LWDT), 138 to 176 (SVGEIIGNIKVINSVDIKQTRPYRLVTGSDDNCCAFFEG), 180 to 218 (KFKFTMSDHSRFVNCVRFSPDGSRLASAGADGQIFLYDG), 224 to 263 (VCSLGGSKAHDGGIYAVSWSPDGTQLLSASGDKTAKIWDV), 270 to 306 (TTFNLGSDVLDQQLGCLWQKDYLLSVSLSGYINYLDK), 311 to 351 (KPFR…YWDA), 358 to 408 (TFTG…KMDV), 432 to 474 (LKDK…LYSI), 480 to 518 (KDEGKTLPAKGAVTDLAYSPDGAFLAVTDANKVVTVFSV), 523 to 561 (SEHNSYYGHHAKALSVAWSPDNEHFASSGMDMMVYVWTL), and 566 to 604 (TRIKMPDAHRLHHVSSLAWLDENTLATVSHDACVKQWTV).

This sequence belongs to the WD repeat AIP1 family.

It is found in the cell membrane. The protein resides in the cytoplasm. Its subcellular location is the cytoskeleton. The protein localises to the nucleus. Induces disassembly of actin filaments in conjunction with ADF/cofilin family proteins. Doesn't sever actin filaments alone, but caps the barbed ends of filaments severed by cofilin, which blocks annealing and depolymerization and allows more extensive severing by cofilin. This Xenopus laevis (African clawed frog) protein is WD repeat-containing protein 1-B (wdr1-b).